We begin with the raw amino-acid sequence, 546 residues long: Glucose-6-phosphate isomerase (546 aa).

The Proton donor role is filled by E356. Active-site residues include H387 and K507.

Belongs to the GPI family.

The protein localises to the cytoplasm. It carries out the reaction alpha-D-glucose 6-phosphate = beta-D-fructose 6-phosphate. The protein operates within carbohydrate biosynthesis; gluconeogenesis. Its pathway is carbohydrate degradation; glycolysis; D-glyceraldehyde 3-phosphate and glycerone phosphate from D-glucose: step 2/4. Catalyzes the reversible isomerization of glucose-6-phosphate to fructose-6-phosphate. The polypeptide is Glucose-6-phosphate isomerase (Syntrophus aciditrophicus (strain SB)).